The chain runs to 66 residues: Small ribosomal subunit protein bS21 (66 aa).

The protein belongs to the bacterial ribosomal protein bS21 family.

This is Small ribosomal subunit protein bS21 from Rickettsia africae (strain ESF-5).